Reading from the N-terminus, the 134-residue chain is MSWQTYVDDHLMCEVDGNPGQQLSAAAIIGHDGSVWAQSSTFPKFKPEEITGIMKNFDEPGHLAPTGLYLGGTKYMVIQGEPIAVIRGKKGSGGVTIKKTGQALVFGVYDEPVTPGQCNLIVERLGDYLIEQGL.

It belongs to the profilin family. As to quaternary structure, occurs in many kinds of cells as a complex with monomeric actin in a 1:1 ratio.

Its subcellular location is the cytoplasm. The protein localises to the cytoskeleton. Binds to actin and affects the structure of the cytoskeleton. At high concentrations, profilin prevents the polymerization of actin, whereas it enhances it at low concentrations. By binding to PIP2, it inhibits the formation of IP3 and DG. The protein is Profilin of Daucus carota (Wild carrot).